Consider the following 335-residue polypeptide: 5-formaminoimidazole-4-carboxamide-1-(beta)-D-ribofuranosyl 5'-monophosphate synthetase (335 aa).

5-amino-1-(5-phospho-beta-D-ribosyl)imidazole-4-carboxamide-binding residues include His21 and Ser86. The ATP-grasp domain occupies 107–315; it reads RELLRWEADQ…YFDKPMDMGE (209 aa). ATP contacts are provided by residues 137-189 and Glu211; that span reads PTEV…VPAY. Asn231 contacts 5-amino-1-(5-phospho-beta-D-ribosyl)imidazole-4-carboxamide. Glu270 and Glu283 together coordinate Mg(2+).

This sequence belongs to the phosphohexose mutase family. It depends on Mg(2+) as a cofactor. Mn(2+) is required as a cofactor.

It catalyses the reaction 5-amino-1-(5-phospho-beta-D-ribosyl)imidazole-4-carboxamide + formate + ATP = 5-formamido-1-(5-phospho-D-ribosyl)imidazole-4-carboxamide + ADP + phosphate. It participates in purine metabolism; IMP biosynthesis via de novo pathway; 5-formamido-1-(5-phospho-D-ribosyl)imidazole-4-carboxamide from 5-amino-1-(5-phospho-D-ribosyl)imidazole-4-carboxamide (formate route): step 1/1. In terms of biological role, catalyzes the ATP- and formate-dependent formylation of 5-aminoimidazole-4-carboxamide-1-beta-d-ribofuranosyl 5'-monophosphate (AICAR) to 5-formaminoimidazole-4-carboxamide-1-beta-d-ribofuranosyl 5'-monophosphate (FAICAR) in the absence of folates. In Pyrobaculum arsenaticum (strain DSM 13514 / JCM 11321 / PZ6), this protein is 5-formaminoimidazole-4-carboxamide-1-(beta)-D-ribofuranosyl 5'-monophosphate synthetase.